Reading from the N-terminus, the 1162-residue chain is DNA-directed RNA polymerase subunit beta (1162 aa).

Belongs to the RNA polymerase beta chain family. In terms of assembly, the RNAP catalytic core consists of 2 alpha, 1 beta, 1 beta' and 1 omega subunit. When a sigma factor is associated with the core the holoenzyme is formed, which can initiate transcription.

The enzyme catalyses RNA(n) + a ribonucleoside 5'-triphosphate = RNA(n+1) + diphosphate. Functionally, DNA-dependent RNA polymerase catalyzes the transcription of DNA into RNA using the four ribonucleoside triphosphates as substrates. This chain is DNA-directed RNA polymerase subunit beta, found in Clavibacter michiganensis subsp. michiganensis (strain NCPPB 382).